The primary structure comprises 86 residues: Antitoxin VapB33 (86 aa).

Antitoxin component of a type II toxin-antitoxin (TA) system. Upon expression in M.smegmatis neutralizes the effect of cognate toxin VapC33. The protein is Antitoxin VapB33 (vapB33) of Mycobacterium tuberculosis (strain ATCC 25618 / H37Rv).